We begin with the raw amino-acid sequence, 263 residues long: Chymotrypsinogen B (263 aa).

Residues 1-18 (MAFLWLVSCFALVGATFG) form the signal peptide. Disulfide bonds link Cys19–Cys140, Cys60–Cys76, Cys154–Cys219, Cys186–Cys200, and Cys209–Cys238. Residues 34-261 (IVNGEDAIPG…LMPWVQEILE (228 aa)) enclose the Peptidase S1 domain. The active-site Charge relay system is His75. Ser93 is modified (phosphoserine). The active-site Charge relay system is the Asp120. Ser213 serves as the catalytic Charge relay system.

Belongs to the peptidase S1 family.

The protein resides in the secreted. The protein localises to the extracellular space. The enzyme catalyses Preferential cleavage: Tyr-|-Xaa, Trp-|-Xaa, Phe-|-Xaa, Leu-|-Xaa.. This is Chymotrypsinogen B (Ctrb1) from Mus musculus (Mouse).